A 53-amino-acid polypeptide reads, in one-letter code: U13-myrmicitoxin-Tb1a (53 aa).

An N-terminal signal peptide occupies residues Met1–Gly23. Positions Glu24 to Gly29 are excised as a propeptide. At Lys52 the chain carries Lysine amide.

As to expression, expressed by the venom gland.

The protein localises to the secreted. In terms of biological role, in vivo, this neurotoxin paralyzes about 70% of blowflies (L.caesar) one hour after intrathoracic injection, when tested at high doses (45 nmol/g). This Tetramorium bicarinatum (Tramp ant) protein is U13-myrmicitoxin-Tb1a.